The sequence spans 393 residues: NAD(P)H-quinone oxidoreductase subunit H, chloroplastic (393 aa).

The protein belongs to the complex I 49 kDa subunit family. As to quaternary structure, NDH is composed of at least 16 different subunits, 5 of which are encoded in the nucleus.

The protein localises to the plastid. The protein resides in the chloroplast thylakoid membrane. It carries out the reaction a plastoquinone + NADH + (n+1) H(+)(in) = a plastoquinol + NAD(+) + n H(+)(out). It catalyses the reaction a plastoquinone + NADPH + (n+1) H(+)(in) = a plastoquinol + NADP(+) + n H(+)(out). In terms of biological role, NDH shuttles electrons from NAD(P)H:plastoquinone, via FMN and iron-sulfur (Fe-S) centers, to quinones in the photosynthetic chain and possibly in a chloroplast respiratory chain. The immediate electron acceptor for the enzyme in this species is believed to be plastoquinone. Couples the redox reaction to proton translocation, and thus conserves the redox energy in a proton gradient. In Fagopyrum esculentum subsp. ancestrale (Wild buckwheat), this protein is NAD(P)H-quinone oxidoreductase subunit H, chloroplastic.